Consider the following 470-residue polypeptide: Ribosomal protein uS12 methylthiotransferase RimO (470 aa).

Residues threonine 4–alanine 120 form the MTTase N-terminal domain. Residues cysteine 13, cysteine 49, cysteine 83, cysteine 155, cysteine 159, and cysteine 162 each contribute to the [4Fe-4S] cluster site. Positions serine 141–glutamate 371 constitute a Radical SAM core domain. A TRAM domain is found at arginine 374–alanine 442. Residues arginine 447 to glycine 470 are disordered.

This sequence belongs to the methylthiotransferase family. RimO subfamily. [4Fe-4S] cluster is required as a cofactor.

It localises to the cytoplasm. The enzyme catalyses L-aspartate(89)-[ribosomal protein uS12]-hydrogen + (sulfur carrier)-SH + AH2 + 2 S-adenosyl-L-methionine = 3-methylsulfanyl-L-aspartate(89)-[ribosomal protein uS12]-hydrogen + (sulfur carrier)-H + 5'-deoxyadenosine + L-methionine + A + S-adenosyl-L-homocysteine + 2 H(+). In terms of biological role, catalyzes the methylthiolation of an aspartic acid residue of ribosomal protein uS12. This Anaeromyxobacter sp. (strain Fw109-5) protein is Ribosomal protein uS12 methylthiotransferase RimO.